A 116-amino-acid polypeptide reads, in one-letter code: Non-specific lipid-transfer protein (116 aa).

A signal peptide spans 1 to 25; that stretch reads MAKMAMMVLCAGVTCMVVGAPYTEA. 4 disulfides stabilise this stretch: C28/C75, C38/C52, C53/C98, and C73/C112.

Belongs to the plant LTP family.

Plant non-specific lipid-transfer proteins transfer phospholipids as well as galactolipids across membranes. May play a role in wax or cutin deposition in the cell walls of expanding epidermal cells and certain secretory tissues. This is Non-specific lipid-transfer protein from Helianthus annuus (Common sunflower).